A 264-amino-acid polypeptide reads, in one-letter code: MVWLARDSCVAAVILLLTVLSPPVALVRDPTPRFLEQVKGECHFYNGTQRVRFLARYIYNREEYTRFDSDVGEFRAVTELGRPSAEYYNKQKEYMEQLRATVDTACKHDYEISESFLVPRTVEPKVTVYPSKTQPLEHHNLLVCSVSDFYPGSVEVRWFRNGEEEKDGLVSTGLIRNGDWTFQLLVMLETVPQGGEVYTCQVEHPSLPSPVRVEWKAQSTSAQNKKMSGVGGIVLGLLFLGAGLFVYFRNQKGQSGLQPTGLLN.

Positions 1-26 (MVWLARDSCVAAVILLLTVLSPPVAL) are cleaved as a signal peptide. The beta-1 stretch occupies residues 27–120 (VRDPTPRFLE…EISESFLVPR (94 aa)). Over 27-226 (VRDPTPRFLE…AQSTSAQNKK (200 aa)) the chain is Extracellular. 2 disulfide bridges follow: Cys-42–Cys-106 and Cys-144–Cys-200. The N-linked (GlcNAc...) asparagine glycan is linked to Asn-46. The beta-2 stretch occupies residues 121–215 (TVEPKVTVYP…SLPSPVRVEW (95 aa)). The Ig-like C1-type domain occupies 124–228 (PKVTVYPSKT…STSAQNKKMS (105 aa)). The connecting peptide stretch occupies residues 216-226 (KAQSTSAQNKK). Residues 227 to 248 (MSGVGGIVLGLLFLGAGLFVYF) form a helical membrane-spanning segment. Residues 249–264 (RNQKGQSGLQPTGLLN) are Cytoplasmic-facing.

It belongs to the MHC class II family.

It is found in the membrane. In terms of biological role, involved in the presentation of foreign antigens to the immune system. The chain is Rano class II histocompatibility antigen, D-1 beta chain (RT1-Db1) from Rattus norvegicus (Rat).